Consider the following 242-residue polypeptide: Uridylate kinase (242 aa).

ATP is bound by residues 15–18, G58, and R62; that span reads KISG. UMP-binding positions include D77 and 139-146; that span reads TGNPFFTT. ATP-binding residues include T166, Y172, and D175.

The protein belongs to the UMP kinase family. In terms of assembly, homohexamer.

The protein localises to the cytoplasm. The catalysed reaction is UMP + ATP = UDP + ADP. Its pathway is pyrimidine metabolism; CTP biosynthesis via de novo pathway; UDP from UMP (UMPK route): step 1/1. With respect to regulation, inhibited by UTP. Its function is as follows. Catalyzes the reversible phosphorylation of UMP to UDP. The protein is Uridylate kinase of Buchnera aphidicola subsp. Acyrthosiphon pisum (strain APS) (Acyrthosiphon pisum symbiotic bacterium).